Reading from the N-terminus, the 204-residue chain is GATA transcription factor 14 (204 aa).

A compositionally biased stretch (basic and acidic residues) spans 57–66; it reads REFDTNDSKP. Residues 57-102 form a disordered region; the sequence is REFDTNDSKPSRNFSNLPTATRGRLHAPKRSGNKRGRQKRLSFKSP. Residues 79–98 are compositionally biased toward basic residues; the sequence is GRLHAPKRSGNKRGRQKRLS. The GATA-type zinc-finger motif lies at 111–165; it reads GITDKSCSHCGTRKTPLWREGPRGAGTLCNACGMRYRTGRLLPEYRPASSPDFKP. Residues 180–204 form a disordered region; that stretch reads RERKSSPPNSFGFSESYHSTRKLGF. The segment covering 185–196 has biased composition (polar residues); it reads SPPNSFGFSESY.

This sequence belongs to the type IV zinc-finger family. Class A subfamily.

It localises to the nucleus. Transcriptional activator that specifically binds 5'-GATA-3' or 5'-GAT-3' motifs within gene promoters. May be involved in the regulation of some light-responsive genes. The polypeptide is GATA transcription factor 14 (GATA14) (Arabidopsis thaliana (Mouse-ear cress)).